A 370-amino-acid chain; its full sequence is Queuine tRNA-ribosyltransferase (370 aa).

The Proton acceptor role is filled by D89. Residues 89–93, D143, Q187, and G214 contribute to the substrate site; that span reads DSGGF. The tract at residues 245-251 is RNA binding; the sequence is GVGKPEN. Residue D264 is the Nucleophile of the active site. The RNA binding; important for wobble base 34 recognition stretch occupies residues 269–273; sequence TRNAR. Zn(2+) contacts are provided by C302, C304, C307, and H333.

This sequence belongs to the queuine tRNA-ribosyltransferase family. In terms of assembly, homodimer. Within each dimer, one monomer is responsible for RNA recognition and catalysis, while the other monomer binds to the replacement base PreQ1. Zn(2+) is required as a cofactor.

The enzyme catalyses 7-aminomethyl-7-carbaguanine + guanosine(34) in tRNA = 7-aminomethyl-7-carbaguanosine(34) in tRNA + guanine. Its pathway is tRNA modification; tRNA-queuosine biosynthesis. In terms of biological role, catalyzes the base-exchange of a guanine (G) residue with the queuine precursor 7-aminomethyl-7-deazaguanine (PreQ1) at position 34 (anticodon wobble position) in tRNAs with GU(N) anticodons (tRNA-Asp, -Asn, -His and -Tyr). Catalysis occurs through a double-displacement mechanism. The nucleophile active site attacks the C1' of nucleotide 34 to detach the guanine base from the RNA, forming a covalent enzyme-RNA intermediate. The proton acceptor active site deprotonates the incoming PreQ1, allowing a nucleophilic attack on the C1' of the ribose to form the product. After dissociation, two additional enzymatic reactions on the tRNA convert PreQ1 to queuine (Q), resulting in the hypermodified nucleoside queuosine (7-(((4,5-cis-dihydroxy-2-cyclopenten-1-yl)amino)methyl)-7-deazaguanosine). The protein is Queuine tRNA-ribosyltransferase of Hamiltonella defensa subsp. Acyrthosiphon pisum (strain 5AT).